A 382-amino-acid polypeptide reads, in one-letter code: D-galactonate dehydratase (382 aa).

Asp-183 serves as a coordination point for Mg(2+). The Proton donor role is filled by His-185. Positions 209 and 235 each coordinate Mg(2+). His-285 functions as the Proton acceptor in the catalytic mechanism.

Belongs to the mandelate racemase/muconate lactonizing enzyme family. GalD subfamily. The cofactor is Mg(2+).

The catalysed reaction is D-galactonate = 2-dehydro-3-deoxy-D-galactonate + H2O. It participates in carbohydrate acid metabolism; D-galactonate degradation; D-glyceraldehyde 3-phosphate and pyruvate from D-galactonate: step 1/3. In terms of biological role, catalyzes the dehydration of D-galactonate to 2-keto-3-deoxy-D-galactonate. This chain is D-galactonate dehydratase, found in Salmonella paratyphi A (strain AKU_12601).